The sequence spans 283 residues: Probable replication-associated protein repA1 (283 aa).

Belongs to the IncFII RepA family.

This protein is essential for plasmid replication; it is involved in copy control functions. In Buchnera aphidicola subsp. Acyrthosiphon pisum (strain APS) (Acyrthosiphon pisum symbiotic bacterium), this protein is Probable replication-associated protein repA1 (repA1).